Here is a 122-residue protein sequence, read N- to C-terminus: Large ribosomal subunit protein uL14 (122 aa).

The protein belongs to the universal ribosomal protein uL14 family. In terms of assembly, part of the 50S ribosomal subunit. Forms a cluster with proteins L3 and L19. In the 70S ribosome, L14 and L19 interact and together make contacts with the 16S rRNA in bridges B5 and B8.

Functionally, binds to 23S rRNA. Forms part of two intersubunit bridges in the 70S ribosome. This Desulfitobacterium hafniense (strain DSM 10664 / DCB-2) protein is Large ribosomal subunit protein uL14.